The following is a 249-amino-acid chain: MVKLAFGSVGDSFSATSIKAYVAEFIATLLFVFAGVGSAIAYGQLTNGGALDPAGLVAIAIAHALALFVGVSVAANISGGHLNPAVTFGLAVGGHITILTGVFYWVAQLLGATVACLLLGFVTHGKAIPTHAVAGISELEGVVFEVVITFALVYTVYATAADPKKGSLGTIAPIAIGFIVGANILAAGPFSGGSMNPARSFGPAVAAGDFAGNWVYWVGPLVGGGLAGLVYGDVFIGGSYQQVADQDYA.

2 helical membrane passes run 20-40 (AYVA…GSAI) and 54-74 (AGLV…VSVA). An NPA 1 motif is present at residues 83–85 (NPA). The next 3 membrane-spanning stretches (helical) occupy residues 102–122 (VFYW…LGFV), 141–161 (GVVF…ATAA), and 168–188 (LGTI…LAAG). The NPA 2 motif lies at 196-198 (NPA). The chain crosses the membrane as a helical span at residues 217–237 (WVGPLVGGGLAGLVYGDVFIG).

The protein belongs to the MIP/aquaporin (TC 1.A.8) family. TIP (TC 1.A.8.10) subfamily.

It is found in the vacuole membrane. Its function is as follows. Aquaporins facilitate the transport of water and small neutral solutes across cell membranes. In Zea mays (Maize), this protein is Aquaporin TIP2-1 (TIP2-1).